The following is an 88-amino-acid chain: Small ribosomal subunit protein uS15 (88 aa).

This sequence belongs to the universal ribosomal protein uS15 family. Part of the 30S ribosomal subunit. Forms a bridge to the 50S subunit in the 70S ribosome, contacting the 23S rRNA.

Functionally, one of the primary rRNA binding proteins, it binds directly to 16S rRNA where it helps nucleate assembly of the platform of the 30S subunit by binding and bridging several RNA helices of the 16S rRNA. Its function is as follows. Forms an intersubunit bridge (bridge B4) with the 23S rRNA of the 50S subunit in the ribosome. The sequence is that of Small ribosomal subunit protein uS15 from Geotalea daltonii (strain DSM 22248 / JCM 15807 / FRC-32) (Geobacter daltonii).